A 95-amino-acid chain; its full sequence is Aspartyl/glutamyl-tRNA(Asn/Gln) amidotransferase subunit C (95 aa).

Belongs to the GatC family. Heterotrimer of A, B and C subunits.

The enzyme catalyses L-glutamyl-tRNA(Gln) + L-glutamine + ATP + H2O = L-glutaminyl-tRNA(Gln) + L-glutamate + ADP + phosphate + H(+). The catalysed reaction is L-aspartyl-tRNA(Asn) + L-glutamine + ATP + H2O = L-asparaginyl-tRNA(Asn) + L-glutamate + ADP + phosphate + 2 H(+). In terms of biological role, allows the formation of correctly charged Asn-tRNA(Asn) or Gln-tRNA(Gln) through the transamidation of misacylated Asp-tRNA(Asn) or Glu-tRNA(Gln) in organisms which lack either or both of asparaginyl-tRNA or glutaminyl-tRNA synthetases. The reaction takes place in the presence of glutamine and ATP through an activated phospho-Asp-tRNA(Asn) or phospho-Glu-tRNA(Gln). This chain is Aspartyl/glutamyl-tRNA(Asn/Gln) amidotransferase subunit C, found in Magnetococcus marinus (strain ATCC BAA-1437 / JCM 17883 / MC-1).